The following is a 433-amino-acid chain: Cell division protein FtsZ homolog 1, chloroplastic (433 aa).

A chloroplast-targeting transit peptide spans 1-66 (MAIIPLAQLN…TRSKSMRLRC (66 aa)). N-acetylserine is present on serine 67. GTP contacts are provided by residues 83 to 87 (GGGNN), 170 to 172 (GTG), glutamate 201, arginine 205, and aspartate 249. The interval 399–433 (GSSGQQENKGMSLPHQKQSPSTISTKSSSPRRLFF) is disordered. The segment covering 414–433 (QKQSPSTISTKSSSPRRLFF) has biased composition (low complexity).

This sequence belongs to the FtsZ family. As to quaternary structure, aggregates to form a contractile ring-like structure; contraction of the ring was accompanied by an increase in the filament turnover rate. This aggregation is regulated in midchloroplast stroma by MIND1 (repressor) and MINE1 (promoter). Self-interacts and binds to FTSZ2-1 in heteromers to form two morphologically distinct types of filaments, termed type-I (smooth filaments) and type-II (rough filaments), in a GTP-dependent manner. Interacts with ARC3. Part of a complex made of ARC3, ARC6, FTSZ1 and FTSZ2. As to expression, in pollen grain, restricted to plastids of vegetative cells. Also present in pollen tubes plastids.

Its subcellular location is the plastid. The protein resides in the chloroplast stroma. The protein localises to the chloroplast thylakoid membrane. In terms of biological role, exhibits GTPase activity. Component of the plastid division machinery that forms a contractile ring at the division site. Required for plastid division in a dose-dependent manner. Involved in epidermal plastids division in a MINE1-dependent manner. Involved in blue light-induced chloroplast movements. May regulate thylakoid development. In the vegetative shoot apex, at the shoot apical meristem (SAM), where the proplastid-to-chloroplast transition takes place, contributes equally with FTSZ2-1 in the L2 layer to plastid division. This Arabidopsis thaliana (Mouse-ear cress) protein is Cell division protein FtsZ homolog 1, chloroplastic.